Here is a 398-residue protein sequence, read N- to C-terminus: MEDYNNQMDHESSGGRGNFLYASPNLGGNYGRAASDHQMGINTFHLQSSGGGGGGGSGDQCNFQSPGTHPINVKTEATTSQHGHPKFQYNNNNNNHHLVSSSRGHQPVVHQLQHNLDLQNDDHSLSSNEVEAIKAKIIAHPQYSNLVEAYMDCQRVGAPSDVVPRLSVARQEFEARQRSSGTSRETSKDPELDQFMEAYYDMLVKYREELTRPIQEAMDFMRRIETQLNMLGNNNNAPPLRIFSPSEDKCEGIGSSEDEQENSGGETEVPEIDPRAEDRELKNHLLRKYSGYLSSLKQELSKKKKKGKLPKEARQKLLSWWELHYKWPYPSESEKVALAESTGLDQKQINNWFINQRKRHWKPSEDMQFMVMDGLHPQNAALYMDGHYTGDVHYRLGP.

Disordered stretches follow at residues 43-69 (TFHLQSSGGGGGGGSGDQCNFQSPGTH), 172-192 (EFEARQRSSGTSRETSKDPEL), and 234-277 (NNNA…PRAE). The span at 49–58 (SGGGGGGGSG) shows a compositional bias: gly residues. The 21-residue stretch at 280–300 (ELKNHLLRKYSGYLSSLKQEL) folds into the ELK domain. Positions 301–364 (SKKKKKGKLP…NQRKRHWKPS (64 aa)) form a DNA-binding region, homeobox; TALE-type.

Belongs to the TALE/KNOX homeobox family. In terms of tissue distribution, expressed only in the stems.

The protein localises to the nucleus. Functionally, probably binds to the DNA sequence 5'-TGAC-3'. The polypeptide is Homeobox protein knotted-1-like 1 (Malus domestica (Apple)).